We begin with the raw amino-acid sequence, 426 residues long: Enolase (426 aa).

A (2R)-2-phosphoglycerate-binding site is contributed by glutamine 165. Glutamate 207 acts as the Proton donor in catalysis. Mg(2+)-binding residues include aspartate 244, glutamate 285, and aspartate 312. Lysine 337, arginine 366, serine 367, and lysine 388 together coordinate (2R)-2-phosphoglycerate. Lysine 337 (proton acceptor) is an active-site residue.

It belongs to the enolase family. Requires Mg(2+) as cofactor.

Its subcellular location is the cytoplasm. The protein resides in the secreted. The protein localises to the cell surface. The enzyme catalyses (2R)-2-phosphoglycerate = phosphoenolpyruvate + H2O. The protein operates within carbohydrate degradation; glycolysis; pyruvate from D-glyceraldehyde 3-phosphate: step 4/5. Functionally, catalyzes the reversible conversion of 2-phosphoglycerate (2-PG) into phosphoenolpyruvate (PEP). It is essential for the degradation of carbohydrates via glycolysis. The polypeptide is Enolase (Thermosynechococcus vestitus (strain NIES-2133 / IAM M-273 / BP-1)).